The chain runs to 360 residues: sn-glycerol-3-phosphate import ATP-binding protein UgpC (360 aa).

The region spanning 4–235 (LSLKGVKKSY…PATTFVASFI (232 aa)) is the ABC transporter domain. Position 37-44 (37-44 (GPSGCGKS)) interacts with ATP.

The protein belongs to the ABC transporter superfamily. sn-glycerol-3-phosphate importer (TC 3.A.1.1.3) family. The complex is composed of two ATP-binding proteins (UgpC), two transmembrane proteins (UgpA and UgpE) and a solute-binding protein (UgpB).

Its subcellular location is the cell inner membrane. It catalyses the reaction sn-glycerol 3-phosphate(out) + ATP + H2O = sn-glycerol 3-phosphate(in) + ADP + phosphate + H(+). Part of the ABC transporter complex UgpBAEC involved in sn-glycerol-3-phosphate (G3P) import. Responsible for energy coupling to the transport system. This chain is sn-glycerol-3-phosphate import ATP-binding protein UgpC, found in Burkholderia mallei (strain ATCC 23344).